An 83-amino-acid chain; its full sequence is Putative beta-neurotoxin RjAa15f (83 aa).

The signal sequence occupies residues 1 to 18; it reads MKILIFIIASFMLIGVEC. Positions 19–82 constitute an LCN-type CS-alpha/beta domain; it reads KEGYPMGRNG…VWDSSNNKCV (64 aa). Cystine bridges form between Cys29/Cys81, Cys33/Cys55, Cys40/Cys62, and Cys44/Cys64.

The protein belongs to the long (4 C-C) scorpion toxin superfamily. Sodium channel inhibitor family. Beta subfamily. As to expression, expressed by the venom gland.

Its subcellular location is the secreted. Functionally, beta toxins bind voltage-independently at site-4 of sodium channels (Nav) and shift the voltage of activation toward more negative potentials thereby affecting sodium channel activation and promoting spontaneous and repetitive firing. This Rhopalurus junceus (Caribbean blue scorpion) protein is Putative beta-neurotoxin RjAa15f.